Here is a 126-residue protein sequence, read N- to C-terminus: Probable 4-amino-4-deoxy-L-arabinose-phosphoundecaprenol flippase subunit ArnF (126 aa).

Residues M1 to Y4 are Cytoplasmic-facing. Residues I5 to V25 form a helical membrane-spanning segment. At V26–S49 the chain is on the periplasmic side. The chain crosses the membrane as a helical span at residues L50–T70. At L71 to A79 the chain is on the cytoplasmic side. A helical membrane pass occupies residues Y80–F100. The Periplasmic portion of the chain corresponds to N101 to E102. Residues T103–S123 traverse the membrane as a helical segment. The Cytoplasmic portion of the chain corresponds to R124 to E126.

It belongs to the ArnF family. As to quaternary structure, heterodimer of ArnE and ArnF.

It is found in the cell inner membrane. Its pathway is bacterial outer membrane biogenesis; lipopolysaccharide biosynthesis. In terms of biological role, translocates 4-amino-4-deoxy-L-arabinose-phosphoundecaprenol (alpha-L-Ara4N-phosphoundecaprenol) from the cytoplasmic to the periplasmic side of the inner membrane. In Photorhabdus laumondii subsp. laumondii (strain DSM 15139 / CIP 105565 / TT01) (Photorhabdus luminescens subsp. laumondii), this protein is Probable 4-amino-4-deoxy-L-arabinose-phosphoundecaprenol flippase subunit ArnF.